Reading from the N-terminus, the 496-residue chain is Maturase K (496 aa).

This sequence belongs to the intron maturase 2 family. MatK subfamily.

The protein resides in the plastid. It localises to the chloroplast. Functionally, usually encoded in the trnK tRNA gene intron. Probably assists in splicing its own and other chloroplast group II introns. The chain is Maturase K from Paeonia suffruticosa (Tree peony).